Here is a 641-residue protein sequence, read N- to C-terminus: Sodium-dependent nutrient amino acid transporter 1 (641 aa).

Residues 1 to 21 (MELKNIEQQPQLQNGNGTATE) are compositionally biased toward polar residues. Residues 1-37 (MELKNIEQQPQLQNGNGTATENNEKGEQKPTEGGERT) are disordered. At 1–38 (MELKNIEQQPQLQNGNGTATENNEKGEQKPTEGGERTN) the chain is on the cytoplasmic side. Over residues 22-35 (NNEKGEQKPTEGGE) the composition is skewed to basic and acidic residues. The next 3 membrane-spanning stretches (helical) occupy residues 39 to 59 (WGNG…LGNV), 72 to 92 (GAFL…MYYL), and 125 to 145 (TVCI…YLFV). 3 N-linked (GlcNAc...) asparagine glycosylation sites follow: Asn181, Asn190, and Asn198. 9 consecutive transmembrane segments (helical) span residues 229–249 (PDWK…LVIM), 258–278 (AAYF…GRAV), 307–327 (AVVQ…MFAS), 341–361 (IVTT…FAIL), 401–421 (LFSV…IVAL), 441–461 (VALV…TPGG), 474–494 (TYVV…IYGL), 516–536 (CWSF…MATI), and 552–572 (IAGW…GIWY).

Belongs to the sodium:neurotransmitter symporter (SNF) (TC 2.A.22) family.

Its subcellular location is the membrane. In terms of biological role, unusual broad substrate spectrum amino acid:sodium cotransporter that promotes absorption of the D isomers of essential amino acids. Neutral amino acids are the preferred substrates, especially methionine and phenylalanine. This is Sodium-dependent nutrient amino acid transporter 1 from Drosophila willistoni (Fruit fly).